The following is a 626-amino-acid chain: Lysine--tRNA ligase, cytoplasmic (626 aa).

Met1 is subject to N-acetylmethionine. Polar residues-rich tracts occupy residues 1 to 11 and 18 to 27; these read MEGAADQTTKA and DSSTTLNAAE. The tract at residues 1–84 is disordered; sequence MEGAADQTTK…QKAVAADDEE (84 aa). A coiled-coil region spans residues 37-69; that stretch reads RSKNALKKEQKMKQKEEEKRRKDEEKAEKAKQA. Positions 42-67 are enriched in basic and acidic residues; it reads LKKEQKMKQKEEEKRRKDEEKAEKAK. A compositionally biased stretch (low complexity) spans 69 to 78; it reads APKASSQKAV. Positions 141-217 form a DNA-binding region, OB; the sequence is SLAGRIMSKR…RGELSIFPRS (77 aa). Substrate contacts are provided by Gly313 and Glu337. ATP contacts are provided by residues 359 to 361 and 367 to 368; these read RNE and HN. 2 residues coordinate substrate: Glu375 and Tyr377. Residues Glu521 and Glu528 each contribute to the Ca(2+) site. An ATP-binding site is contributed by 528 to 529; that stretch reads EL. 2 residues coordinate substrate: Asn531 and Glu535. 584 to 587 contacts ATP; that stretch reads GIDR.

It belongs to the class-II aminoacyl-tRNA synthetase family. It depends on Ca(2+) as a cofactor.

The protein localises to the cytoplasm. The protein resides in the cytosol. The catalysed reaction is tRNA(Lys) + L-lysine + ATP = L-lysyl-tRNA(Lys) + AMP + diphosphate. Catalyzes the specific attachment of an amino acid to its cognate tRNA in a 2 step reaction: the amino acid (AA) is first activated by ATP to form AA-AMP and then transferred to the acceptor end of the tRNA. Promotes aminoacylation of non-cognate tRNAs and translational recoding of lysine at nonsense codons. The polypeptide is Lysine--tRNA ligase, cytoplasmic (Arabidopsis thaliana (Mouse-ear cress)).